A 389-amino-acid chain; its full sequence is NAD-dependent protein deacetylase sirtuin-2 (389 aa).

Residues 1–34 are disordered; it reads MAEPDPSHPLETQAGKVQEAQDSDSDSEGGAAGG. A2 carries the post-translational modification N-acetylalanine. A phosphoserine mark is found at S23, S25, and S27. The Nuclear export signal signature appears at 41 to 51; sequence LRNLFSQTLSL. Position 53 is a phosphoserine (S53). The Deacetylase sirtuin-type domain occupies 57–338; that stretch reads RLLDELTLEG…LALAELLGWK (282 aa). NAD(+) is bound by residues 85 to 89 and 95 to 97; these read AGIST and DFR. The residue at position 100 (S100) is a Phosphoserine. An NAD(+)-binding site is contributed by 167–170; that stretch reads QNID. The Proton acceptor role is filled by H187. C195 and C200 together coordinate Zn(2+). S207 carries the post-translational modification Phosphoserine. Zn(2+) contacts are provided by C221 and C224. NAD(+) is bound by residues 262–263, 286–288, and C324; these read TS and NKE. The interval 351–389 is disordered; it reads SIDAQSGAGVPNPSTSASPKKSPPPAKDEARTTEREKPQ. A compositionally biased stretch (low complexity) spans 361-370; it reads PNPSTSASPK. Phosphoserine; by CDK2 and CDK5 is present on S368. S372 carries the post-translational modification Phosphoserine. A compositionally biased stretch (basic and acidic residues) spans 376–389; it reads AKDEARTTEREKPQ.

The protein belongs to the sirtuin family. Class I subfamily. In terms of assembly, interacts with CDC20, FOXO3 and FZR1. Associates with microtubules in primary cortical mature neurons. Homotrimer. Isoform 1 and isoform 2 interact (via both phosphorylated, unphosphorylated, active or inactive forms) with HDAC6; the interaction is necessary for the complex to interact with alpha-tubulin, suggesting that these proteins belong to a large complex that deacetylates the cytoskeleton. Interacts with FOXO1; the interaction is disrupted upon serum-starvation or oxidative stress, leading to increased level of acetylated FOXO1 and induction of autophagy. Interacts with RELA; the interaction occurs in the cytoplasm and is increased in a TNF-alpha-dependent manner. Interacts with HOXA10; the interaction is direct. Interacts with YWHAB and YWHAG; the interactions occur in a AKT-dependent manner and increase SIRT2-dependent TP53 deacetylation. Interacts with MAPK1/ERK2 and MAPK3/ERK1; the interactions increase SIRT2 stability and deacetylation activity. Interacts (phosphorylated form) with KMT5A isoform 2; the interaction is direct, stimulates KMT5A-mediated methyltransferase activity on histone at 'Lys-20' (H4K20me1) and is increased in a H(2)O(2)-induced oxidative stress-dependent manner. Interacts with G6PD; the interaction is enhanced by H(2)O(2) treatment. Interacts with a G1/S-specific cyclin E-CDK2 complex. Interacts with AURKA, CDK5R1 (p35 form) and CDK5 and HIF1A. Isoform 1, isoform 2 and isoform 5 interact (via C-terminus region) with EP300. Interacts with the tRNA ligase SARS1; recruited to the VEGFA promoter via interaction with SARS1. Interacts with BEX4; negatively regulates alpha-tubulin deacetylation by SIRT2. Zn(2+) is required as a cofactor. Phosphorylated at phosphoserine and phosphothreonine. Phosphorylated at Ser-368 by a mitotic kinase CDK1/cyclin B at the G2/M transition; phosphorylation regulates the delay in cell-cycle progression. Phosphorylated at Ser-368 by a mitotic kinase G1/S-specific cyclin E/Cdk2 complex; phosphorylation inactivates SIRT2-mediated alpha-tubulin deacetylation and thereby negatively regulates cell adhesion, cell migration and neurite outgrowth during neuronal differentiation. Phosphorylated by cyclin A/Cdk2 and p35-Cdk5 complexes and to a lesser extent by the cyclin D3/Cdk4 and cyclin B/Cdk1, in vitro. Dephosphorylated at Ser-368 by CDC14A and CDC14B around early anaphase. Post-translationally, acetylated by EP300; acetylation leads both to the decreased of SIRT2-mediated alpha-tubulin deacetylase activity and SIRT2-mediated down-regulation of TP53 transcriptional activity. In terms of processing, ubiquitinated. In terms of tissue distribution, isoform 1 is expressed in heart, liver and skeletal muscle, weakly expressed in the cortex. Isoform 2 is strongly expressed in the cortex, weakly expressed in heart and liver. Weakly expressed in several malignancies including breast, liver, brain, kidney and prostate cancers compared to normal tissues. Weakly expressed in glioma cell lines compared to normal brain tissues (at protein level). Widely expressed. Highly expressed in heart, brain and skeletal muscle, while it is weakly expressed in placenta and lung. Down-regulated in many gliomas suggesting that it may act as a tumor suppressor gene in human gliomas possibly through the regulation of microtubule network.

The protein resides in the nucleus. The protein localises to the cytoplasm. It is found in the perinuclear region. It localises to the cytoskeleton. Its subcellular location is the microtubule organizing center. The protein resides in the centrosome. The protein localises to the centriole. It is found in the spindle. It localises to the midbody. Its subcellular location is the chromosome. The protein resides in the perikaryon. The protein localises to the cell projection. It is found in the growth cone. It localises to the myelin membrane. The enzyme catalyses N(6)-acetyl-L-lysyl-[protein] + NAD(+) + H2O = 2''-O-acetyl-ADP-D-ribose + nicotinamide + L-lysyl-[protein]. It catalyses the reaction N(6)-tetradecanoyl-L-lysyl-[protein] + NAD(+) + H2O = 2''-O-tetradecanoyl-ADP-D-ribose + nicotinamide + L-lysyl-[protein]. The catalysed reaction is N(6)-hexadecanoyl-L-lysyl-[protein] + NAD(+) + H2O = 2''-O-hexadecanoyl-ADP-D-ribose + nicotinamide + L-lysyl-[protein]. Inhibited by Sirtinol, A3 and M15 small molecules. Inhibited by nicotinamide. Inhibited by a macrocyclic peptide inhibitor S2iL5. Inhibited by EP300-induced acetylation. In terms of biological role, NAD-dependent protein deacetylase, which deacetylates internal lysines on histone and alpha-tubulin as well as many other proteins such as key transcription factors. Participates in the modulation of multiple and diverse biological processes such as cell cycle control, genomic integrity, microtubule dynamics, cell differentiation, metabolic networks, and autophagy. Plays a major role in the control of cell cycle progression and genomic stability. Functions in the antephase checkpoint preventing precocious mitotic entry in response to microtubule stress agents, and hence allowing proper inheritance of chromosomes. Positively regulates the anaphase promoting complex/cyclosome (APC/C) ubiquitin ligase complex activity by deacetylating CDC20 and FZR1, then allowing progression through mitosis. Associates both with chromatin at transcriptional start sites (TSSs) and enhancers of active genes. Plays a role in cell cycle and chromatin compaction through epigenetic modulation of the regulation of histone H4 'Lys-20' methylation (H4K20me1) during early mitosis. Specifically deacetylates histone H4 at 'Lys-16' (H4K16ac) between the G2/M transition and metaphase enabling H4K20me1 deposition by KMT5A leading to ulterior levels of H4K20me2 and H4K20me3 deposition throughout cell cycle, and mitotic S-phase progression. Deacetylates KMT5A modulating KMT5A chromatin localization during the mitotic stress response. Also deacetylates histone H3 at 'Lys-57' (H3K56ac) during the mitotic G2/M transition. Upon bacterium Listeria monocytogenes infection, deacetylates 'Lys-18' of histone H3 in a receptor tyrosine kinase MET- and PI3K/Akt-dependent manner, thereby inhibiting transcriptional activity and promoting late stages of listeria infection. During oocyte meiosis progression, may deacetylate histone H4 at 'Lys-16' (H4K16ac) and alpha-tubulin, regulating spindle assembly and chromosome alignment by influencing microtubule dynamics and kinetochore function. Deacetylates histone H4 at 'Lys-16' (H4K16ac) at the VEGFA promoter and thereby contributes to regulate expression of VEGFA, a key regulator of angiogenesis. Deacetylates alpha-tubulin at 'Lys-40' and hence controls neuronal motility, oligodendroglial cell arbor projection processes and proliferation of non-neuronal cells. Phosphorylation at Ser-368 by a G1/S-specific cyclin E-CDK2 complex inactivates SIRT2-mediated alpha-tubulin deacetylation, negatively regulating cell adhesion, cell migration and neurite outgrowth during neuronal differentiation. Deacetylates PARD3 and participates in the regulation of Schwann cell peripheral myelination formation during early postnatal development and during postinjury remyelination. Involved in several cellular metabolic pathways. Plays a role in the regulation of blood glucose homeostasis by deacetylating and stabilizing phosphoenolpyruvate carboxykinase PCK1 activity in response to low nutrient availability. Acts as a key regulator in the pentose phosphate pathway (PPP) by deacetylating and activating the glucose-6-phosphate G6PD enzyme, and therefore, stimulates the production of cytosolic NADPH to counteract oxidative damage. Maintains energy homeostasis in response to nutrient deprivation as well as energy expenditure by inhibiting adipogenesis and promoting lipolysis. Attenuates adipocyte differentiation by deacetylating and promoting FOXO1 interaction to PPARG and subsequent repression of PPARG-dependent transcriptional activity. Plays a role in the regulation of lysosome-mediated degradation of protein aggregates by autophagy in neuronal cells. Deacetylates FOXO1 in response to oxidative stress or serum deprivation, thereby negatively regulating FOXO1-mediated autophagy. Deacetylates a broad range of transcription factors and co-regulators regulating target gene expression. Deacetylates transcriptional factor FOXO3 stimulating the ubiquitin ligase SCF(SKP2)-mediated FOXO3 ubiquitination and degradation. Deacetylates HIF1A and therefore promotes HIF1A degradation and inhibition of HIF1A transcriptional activity in tumor cells in response to hypoxia. Deacetylates RELA in the cytoplasm inhibiting NF-kappaB-dependent transcription activation upon TNF-alpha stimulation. Inhibits transcriptional activation by deacetylating p53/TP53 and EP300. Also deacetylates EIF5A. Functions as a negative regulator on oxidative stress-tolerance in response to anoxia-reoxygenation conditions. Plays a role as tumor suppressor. In addition to protein deacetylase activity, also has activity toward long-chain fatty acyl groups and mediates protein-lysine demyristoylation and depalmitoylation of target proteins, such as ARF6 and KRAS, thereby regulating their association with membranes. Deacetylates EP300, alpha-tubulin and histone H3 and H4. Its function is as follows. Lacks deacetylation activity, at least toward known SIRT2 targets. The chain is NAD-dependent protein deacetylase sirtuin-2 (SIRT2) from Homo sapiens (Human).